The sequence spans 320 residues: Zona pellucida-binding protein 1 (320 aa).

Asparagine 85 and asparagine 158 each carry an N-linked (GlcNAc...) asparagine glycan.

Belongs to the zona pellucida-binding protein Sp38 family.

The protein localises to the cytoplasmic vesicle. Its subcellular location is the secretory vesicle. It is found in the acrosome. It localises to the secreted. The protein resides in the acrosome membrane. In terms of biological role, plays a role in sperm morphogenesis and in sperm-oocyte interaction during fertilization. This Gallus gallus (Chicken) protein is Zona pellucida-binding protein 1 (ZPBP1).